Consider the following 172-residue polypeptide: Translation initiation factor IF-3 (172 aa).

The protein belongs to the IF-3 family. As to quaternary structure, monomer.

Its subcellular location is the cytoplasm. Its function is as follows. IF-3 binds to the 30S ribosomal subunit and shifts the equilibrium between 70S ribosomes and their 50S and 30S subunits in favor of the free subunits, thus enhancing the availability of 30S subunits on which protein synthesis initiation begins. The sequence is that of Translation initiation factor IF-3 from Oceanobacillus iheyensis (strain DSM 14371 / CIP 107618 / JCM 11309 / KCTC 3954 / HTE831).